The following is a 902-amino-acid chain: MRIICRQIVLLFSGFWGLAMGAFPSSVQIGGLFIRNTDQEYTAFRLAIFLHNTSPNASEAPFNLVPHVDNIETANSFAVTNAFCSQYSRGVFAIFGLYDKRSVHTLTSFCSALHISLITPSFPTEGESQFVLQLRPSLRGALLSLLDHYEWNCFVFLYDTDRGYSILQAIMEKAGQNGWHVSAICVENFNDVSYRQLLEELDRRQEKKFVIDCEIERLQNILEQIVSVGKHVKGYHYIIANLGFKDISLERFIHGGANVTGFQLVDFNTPMVTKLMDRWKKLDQREYPGSETPPKYTSALTYDGVLVMAETFRSLRRQKIDISRRGNAGDCLANPAAPWGQGIDMERTLKQVRIQGLTGNVQFDHYGRRVNYTMDVFELKSTGPRKVGYWNDMDKLVLIQDAPTLGNDTAAIENRTVVVTTIMESPYVMYKKNHEMFEGNDKYEGYCVDLASEIAKHIGIKYKIAIVPDGKYGARDADTKIWNGMVGELVYGKAEIAIAPLTITLVREEVIDFSKPFMSLGISIMIKKPQKSKPGVFSFLDPLAYEIWMCIVFAYIGVSVVLFLVSRFSPYEWHTEEPEDGKEGPSDQPPNEFGIFNSLWFSLGAFMQQGCDISPRSLSGRIVGGVWWFFTLIIISSYTANLAAFLTVERMVSPIESAEDLAKQTEIAYGTLDSGSTKEFFRRSKIAVYEKMWTYMRSAEPSVFTRTTAEGVARVRKSKGKFAFLLESTMNEYIEQRKPCDTMKVGGNLDSKGYGVATPKGSSLRTPVNLAVLKLSEAGVLDKLKNKWWYDKGECGPKDSGSKDKTSALSLSNVAGVFYILVGGLGLAMLVALIEFCYKSRAEAKRMKLTFSEAIRNKARLSITGSVGENGRVLTPDCPKAVHTGTAIRQSSGLAVIASDLP.

The N-terminal stretch at 1–20 is a signal peptide; the sequence is MRIICRQIVLLFSGFWGLAM. Residues 22–544 lie on the Extracellular side of the membrane; it reads AFPSSVQIGG…GVFSFLDPLA (523 aa). N-linked (GlcNAc...) asparagine glycans are attached at residues asparagine 52, asparagine 56, asparagine 258, asparagine 371, asparagine 407, and asparagine 414. Cysteines 84 and 331 form a disulfide. Residues proline 500, threonine 502, and arginine 507 each contribute to the L-glutamate site. The helical transmembrane segment at 545–565 threads the bilayer; that stretch reads YEIWMCIVFAYIGVSVVLFLV. Residues 566 to 592 lie on the Cytoplasmic side of the membrane; that stretch reads SRFSPYEWHTEEPEDGKEGPSDQPPNE. Positions 593-608 form an intramembrane region, helical; Pore-forming; the sequence is FGIFNSLWFSLGAFMQ. The stretch at 609–611 is an intramembrane region; it reads QGC. Cysteine 611 carries S-palmitoyl cysteine lipidation. The Cytoplasmic segment spans residues 612-617; that stretch reads DISPRS. Residues 618–638 traverse the membrane as a helical segment; that stretch reads LSGRIVGGVWWFFTLIIISSY. The Extracellular portion of the chain corresponds to 639–813; that stretch reads TANLAAFLTV…DKTSALSLSN (175 aa). 3 residues coordinate L-glutamate: serine 676, threonine 677, and glutamate 727. A disulfide bridge links cysteine 740 with cysteine 795. The chain crosses the membrane as a helical span at residues 814–834; it reads VAGVFYILVGGLGLAMLVALI. The Cytoplasmic portion of the chain corresponds to 835 to 902; the sequence is EFCYKSRAEA…GLAVIASDLP (68 aa). Residue cysteine 837 is the site of S-palmitoyl cysteine attachment. Serine 862 bears the Phosphoserine mark.

This sequence belongs to the glutamate-gated ion channel (TC 1.A.10.1) family. GRIA4 subfamily. Homotetramer or heterotetramer of pore-forming glutamate receptor subunits. Tetramers may be formed by the dimerization of dimers. Interacts with EPB41L1 via its C-terminus. Isoform 3 interacts with PICK1. Found in a complex with GRIA1, GRIA2, GRIA3, CNIH2, CNIH3, CACNG2, CACNG3, CACNG4, CACNG5, CACNG7 and CACNG8. Interacts with CACNG5 and PRKCG. Found in a complex with GRIA1, GRIA2, GRIA3, DLG4, CACNG8 and CNIH2. Palmitoylated. Depalmitoylated upon L-glutamate stimulation. ZDHHC3/GODZ specifically palmitoylates Cys-611, which leads to Golgi retention and decreased cell surface expression. In contrast, Cys-837 palmitoylation does not affect cell surface expression but regulates stimulation-dependent endocytosis. Post-translationally, phosphorylated at Ser-862 by PRKCG; phosphorylation increases plasma membrane-associated GRI4 expression.

It localises to the cell membrane. The protein resides in the postsynaptic cell membrane. Its subcellular location is the cell projection. It is found in the dendrite. The enzyme catalyses Ca(2+)(in) = Ca(2+)(out). It carries out the reaction Na(+)(in) = Na(+)(out). It catalyses the reaction Mg(2+)(in) = Mg(2+)(out). Its function is as follows. Ionotropic glutamate receptor that functions as a ligand-gated cation channel, gated by L-glutamate and glutamatergic agonists such as alpha-amino-3-hydroxy-5-methyl-4-isoxazolepropionic acid (AMPA), quisqualic acid, and kainic acid. L-glutamate acts as an excitatory neurotransmitter at many synapses in the central nervous system and plays an important role in fast excitatory synaptic transmission. Binding of the excitatory neurotransmitter L-glutamate induces a conformation change, leading to the opening of the cation channel, and thereby converts the chemical signal to an electrical impulse upon entry of monovalent and divalent cations such as sodium and calcium. The receptor then desensitizes rapidly and enters a transient inactive state, characterized by the presence of bound agonist. In the presence of CACNG8, shows resensitization which is characterized by a delayed accumulation of current flux upon continued application of L-glutamate. This is Glutamate receptor 4 from Mus musculus (Mouse).